Reading from the N-terminus, the 609-residue chain is Pescadillo homolog (609 aa).

The 94-residue stretch at 320–413 folds into the BRCT domain; the sequence is KLKNLFKGLK…KLLPTNKYFI (94 aa). 2 disordered regions span residues 443–462 and 488–609; these read DEFEKQERAEGISDDEDEDF and ALNS…EILA. Composition is skewed to basic and acidic residues over residues 444–453 and 488–498; these read EFEKQERAEG and ALNSGEAKKEQ. The stretch at 481–509 forms a coiled coil; it reads FREEKAEALNSGEAKKEQAEEDNEDDDQE. Residues 499 to 512 show a composition bias toward acidic residues; that stretch reads AEEDNEDDDQEPDQ. Basic and acidic residues-rich tracts occupy residues 513–524 and 533–552; these read DETKKQRSEKKQ and VFKENPKEQKQLTKQEEALR. Residues 539–607 are a coiled coil; sequence KEQKQLTKQE…QKRKAQRKEI (69 aa). Over residues 554 to 564 the composition is skewed to basic residues; that stretch reads KMVKSRHKKLY. Basic and acidic residues predominate over residues 567-609; the sequence is LLDKQKKATKEANLLREKRQQIDKQKRKEQTQKRKAQRKEILA.

Belongs to the pescadillo family.

Its subcellular location is the nucleus. It is found in the nucleolus. The protein localises to the nucleoplasm. Required for maturation of ribosomal RNAs and formation of the large ribosomal subunit. The polypeptide is Pescadillo homolog (Aedes aegypti (Yellowfever mosquito)).